The chain runs to 76 residues: Paralithocin 3 (76 aa).

A signal peptide spans 1 to 23 (MGPMKVLLVMLVVMVAAPHIADA). 4 cysteine pairs are disulfide-bonded: Cys31/Cys62, Cys40/Cys58, Cys44/Cys56, and Cys49/Cys59. Pro74 carries the proline amide; partial modification.

It belongs to the paralithocin family. Post-translationally, the amidated form is probably the active form.

Functionally, has antibacterial activity, mainly against marine Gram-positive bacteria like C.maltaromaticum (MIC=25 uM), C.mobile (MIC=12.5 uM), C.divergens (MIC=25 uM) and C.funditum (MIC=12.5 uM) but also against C.glutamicum (MIC=12.5 uM). Has very little or no activity against Gram-negative bacteria. This Paralithodes camtschaticus (Red king crab) protein is Paralithocin 3.